A 363-amino-acid polypeptide reads, in one-letter code: tRNA (guanine(26)-N(2))-dimethyltransferase (363 aa).

The 348-residue stretch at 5–352 (VLRREGGVKF…GEYGEVLMAF (348 aa)) folds into the Trm1 methyltransferase domain. Residues arginine 40, arginine 67, aspartate 85, aspartate 111, and alanine 112 each contribute to the S-adenosyl-L-methionine site.

It belongs to the class I-like SAM-binding methyltransferase superfamily. Trm1 family.

The catalysed reaction is guanosine(26) in tRNA + 2 S-adenosyl-L-methionine = N(2)-dimethylguanosine(26) in tRNA + 2 S-adenosyl-L-homocysteine + 2 H(+). Functionally, dimethylates a single guanine residue at position 26 of a number of tRNAs using S-adenosyl-L-methionine as donor of the methyl groups. In Pyrobaculum aerophilum (strain ATCC 51768 / DSM 7523 / JCM 9630 / CIP 104966 / NBRC 100827 / IM2), this protein is tRNA (guanine(26)-N(2))-dimethyltransferase.